The chain runs to 319 residues: GATA transcription factor 18 (319 aa).

A compositionally biased stretch (low complexity) spans 1 to 15 (MPDAAAAAAAAQDAD). The interval 1-74 (MPDAAAAAAA…AAPEPVSALL (74 aa)) is disordered. Positions 32-60 (NNDDDGDDGTEEDEEEDDDEEGDEEELPP) are enriched in acidic residues. A Tify domain is found at 74 to 109 (LPGSPNQLTLLFQGEVYVFESVTPEKVQAVLLLLGS). Positions 143–185 (RVASLIRFREKRKERNFDKKIRYAVRKEVALRMQRRKGQFAGR) constitute a CCT domain. The GATA-type zinc-finger motif lies at 215–242 (CQNCGTSEKMTPAMRRGPAGPRTLCNAC). The segment at 292-319 (ITASHGEVMGDSTPANEAEIGAPKAQSQ) is disordered.

Belongs to the type IV zinc-finger family. Class C subfamily.

It is found in the nucleus. Functionally, transcriptional activator that specifically binds 5'-GATA-3' or 5'-GAT-3' motifs within gene promoters. This chain is GATA transcription factor 18, found in Oryza sativa subsp. indica (Rice).